The sequence spans 284 residues: Bifunctional protein FolD (284 aa).

NADP(+) contacts are provided by residues 165-167, serine 190, and valine 231; that span reads GRS.

This sequence belongs to the tetrahydrofolate dehydrogenase/cyclohydrolase family. As to quaternary structure, homodimer.

The enzyme catalyses (6R)-5,10-methylene-5,6,7,8-tetrahydrofolate + NADP(+) = (6R)-5,10-methenyltetrahydrofolate + NADPH. The catalysed reaction is (6R)-5,10-methenyltetrahydrofolate + H2O = (6R)-10-formyltetrahydrofolate + H(+). The protein operates within one-carbon metabolism; tetrahydrofolate interconversion. In terms of biological role, catalyzes the oxidation of 5,10-methylenetetrahydrofolate to 5,10-methenyltetrahydrofolate and then the hydrolysis of 5,10-methenyltetrahydrofolate to 10-formyltetrahydrofolate. The sequence is that of Bifunctional protein FolD from Geobacillus kaustophilus (strain HTA426).